Reading from the N-terminus, the 481-residue chain is FAD-linked oxidoreductase afoF (481 aa).

The N-terminal stretch at 1–16 is a signal peptide; that stretch reads MRFLLQSITLVAAARA. Residues 52-227 enclose the FAD-binding PCMH-type domain; it reads SEWRPPTWTG…TAATFKMFDQ (176 aa). An N-linked (GlcNAc...) asparagine glycan is attached at Asn82. Residue His92 is modified to Pros-8alpha-FAD histidine. N-linked (GlcNAc...) asparagine glycosylation is found at Asn196, Asn241, Asn276, Asn309, Asn312, and Asn376.

It belongs to the oxygen-dependent FAD-linked oxidoreductase family. FAD serves as cofactor.

Its function is as follows. FAD-linked oxidoreductase; part of the gene cluster that mediates the biosynthesis of asperfuranone, a probable antitumor agent. The polyketide synthase afoG is responsible for producing the 3,5-dimethyloctadienone moiety from acetyl-CoA, three malonyl-CoA, and two S-adenosyl methionines (SAM). The 3,5-dimethyloctadienone moiety is then loaded onto the SAT domain of afoE and extended with four malonyl-CoA and one SAM, which leads to the formation of 2,4-dihydroxy-6-(5,7-dimethyl-2-oxo-trans-3-trans-5-nonadienyl)-3-methylbenzaldehyde (compound 2) after reductive release and aldol condensation. AfoD is the next enzyme in the biosynthesis sequence and hydroxylates the side chain at the benzylic position of compound 2. After benzylic hydroxylation, a furan ring is formed after five-member ring hemiacetal formation and water elimination. AfoF and afoC are proposed to oxidize the R-diketone proton and to reduce the unconjugated carbonyl group, respectively, to generate asperfuranone. Since no intermediates could be isolated from afoF and afoC deletants, the sequence of these two enzymes is not fully understood. Moreover, since afoC deletant still produces a small amount of asperfuranone, other endogenous oxidoreductases might catalyze the same reaction with much less efficiency. The chain is FAD-linked oxidoreductase afoF from Emericella nidulans (strain FGSC A4 / ATCC 38163 / CBS 112.46 / NRRL 194 / M139) (Aspergillus nidulans).